A 926-amino-acid polypeptide reads, in one-letter code: OTU domain-containing protein 7A (926 aa).

Serine 121 is subject to Phosphoserine. The TRAF-binding stretch occupies residues 170-413 (ERDLIEQATM…AVDPGKDWEW (244 aa)). Positions 185 to 452 (AGRLNWWSTV…VTWIRIPSET (268 aa)) are catalytic. Residues 201-377 (LLPLATTGDG…QAHFSALVSM (177 aa)) form the OTU domain. Residue aspartate 209 is part of the active site. The active-site Nucleophile is cysteine 212. Catalysis depends on histidine 370, which acts as the Proton acceptor. Disordered regions lie at residues 455–517 (PLAQ…DSVA), 540–615 (GLVH…GDAW), and 671–779 (EQEQ…ARQS). Over residues 484 to 494 (VCSNSNSNNGK) the composition is skewed to low complexity. Over residues 495 to 513 (NGKDKEKEKQRKDKDKTRA) the composition is skewed to basic and acidic residues. Positions 497–512 (KDKEKEKQRKDKDKTR) match the Nuclear localization signal motif. Composition is skewed to low complexity over residues 579–595 (GASA…PSPT), 680–691 (AAAAAAATATAT), and 731–750 (SPGT…AASP). The span at 751–767 (GPGGGARRAAPGTGGPT) shows a compositional bias: gly residues. Omega-N-methylarginine is present on arginine 880. The segment at 884–919 (GPAQRRCQRENCAFYGRAETEHFCSYCYREELRRRR) adopts an A20-type zinc-finger fold. The Zn(2+) site is built by cysteine 890, cysteine 895, cysteine 907, and cysteine 910.

This sequence belongs to the peptidase C64 family.

The protein resides in the cytoplasm. It localises to the nucleus. The enzyme catalyses Thiol-dependent hydrolysis of ester, thioester, amide, peptide and isopeptide bonds formed by the C-terminal Gly of ubiquitin (a 76-residue protein attached to proteins as an intracellular targeting signal).. Functionally, deubiquitinase, which cleaves 'Lys-11'-linked polyubiquitin chains. The sequence is that of OTU domain-containing protein 7A (Otud7a) from Mus musculus (Mouse).